Reading from the N-terminus, the 397-residue chain is Tryptophan synthase beta chain (397 aa).

Lysine 86 bears the N6-(pyridoxal phosphate)lysine mark.

Belongs to the TrpB family. In terms of assembly, tetramer of two alpha and two beta chains. Pyridoxal 5'-phosphate serves as cofactor.

It carries out the reaction (1S,2R)-1-C-(indol-3-yl)glycerol 3-phosphate + L-serine = D-glyceraldehyde 3-phosphate + L-tryptophan + H2O. It functions in the pathway amino-acid biosynthesis; L-tryptophan biosynthesis; L-tryptophan from chorismate: step 5/5. Its function is as follows. The beta subunit is responsible for the synthesis of L-tryptophan from indole and L-serine. This is Tryptophan synthase beta chain from Tolumonas auensis (strain DSM 9187 / NBRC 110442 / TA 4).